Reading from the N-terminus, the 210-residue chain is Cyclin-U1-1 (210 aa).

It belongs to the cyclin family. Cyclin U/P subfamily. Interacts with CDKA-1. Expressed in roots and flowers. Expressed in the shoot apex, leaf primordia and young leaves.

In Arabidopsis thaliana (Mouse-ear cress), this protein is Cyclin-U1-1 (CYCU1-1).